We begin with the raw amino-acid sequence, 336 residues long: Mitochondrial thiamine pyrophosphate carrier 1 (336 aa).

Solcar repeat units lie at residues 11–98 (ISST…VNQV), 112–202 (SSGA…VKDS), and 221–323 (TKGW…SLSI). The next 6 helical transmembrane spans lie at 17 to 37 (MLCGGIAGMVSRFCIAPLDVV), 66 to 86 (GVTALWKGNIPAELLYVFYGA), 118 to 138 (FIAGATAGAGATIATYPFDLF), 177 to 197 (GVSSSIISIAPYMGLFFASYG), 228 to 244 (TAGLCAGTASKALVFPL), and 298 to 315 (GFLVSLIKSAPTSAITMY).

The protein belongs to the mitochondrial carrier (TC 2.A.29) family.

It is found in the mitochondrion inner membrane. In terms of biological role, mitochondrial transporter that mediates uptake of thiamine pyrophosphate (ThPP) into mitochondria. This chain is Mitochondrial thiamine pyrophosphate carrier 1 (TPC1), found in Yarrowia lipolytica (strain CLIB 122 / E 150) (Yeast).